Here is a 1024-residue protein sequence, read N- to C-terminus: Beta-galactosidase (1024 aa).

Asparagine 100 and aspartate 198 together coordinate substrate. Residue aspartate 198 coordinates Na(+). 3 residues coordinate Mg(2+): glutamate 414, histidine 416, and glutamate 459. Substrate is bound by residues glutamate 459 and 535-538 (EYAH). The Proton donor role is filled by glutamate 459. Glutamate 535 (nucleophile) is an active-site residue. Asparagine 595 is a Mg(2+) binding site. Positions 599 and 602 each coordinate Na(+). Asparagine 602 and tryptophan 995 together coordinate substrate.

The protein belongs to the glycosyl hydrolase 2 family. As to quaternary structure, homotetramer. It depends on Mg(2+) as a cofactor. Na(+) is required as a cofactor.

It catalyses the reaction Hydrolysis of terminal non-reducing beta-D-galactose residues in beta-D-galactosides.. This chain is Beta-galactosidase, found in Vibrio cholerae serotype O1 (strain ATCC 39541 / Classical Ogawa 395 / O395).